A 373-amino-acid chain; its full sequence is StAR-related lipid transfer protein 7, mitochondrial (373 aa).

The N-terminal 61 residues, 1 to 61 (MFPRRPPATL…YSESSRCALL (61 aa)), are a transit peptide targeting the mitochondrion. A coiled-coil region spans residues 89-114 (DEERIQEEELQRSINEMKRLEEMSNI). An START domain is found at 115–330 (FQSSGVENYP…LHMATLKAKN (216 aa)). 2 disordered regions span residues 118–141 (SGVE…KDKE) and 347–373 (SSEA…IEYA).

In terms of processing, proteolytically cleaved by PARL. As to expression, expressed in epithelial cells of airways, peripheral bronchioles and alveoli, as well as in the basal cell layer of the epidermis (at protein level).

The protein localises to the mitochondrion. May play a protective role in mucosal tissues by preventing exaggerated allergic responses. This Mus musculus (Mouse) protein is StAR-related lipid transfer protein 7, mitochondrial (Stard7).